A 645-amino-acid chain; its full sequence is DNA mismatch repair protein MutL (645 aa).

It belongs to the DNA mismatch repair MutL/HexB family.

Functionally, this protein is involved in the repair of mismatches in DNA. It is required for dam-dependent methyl-directed DNA mismatch repair. May act as a 'molecular matchmaker', a protein that promotes the formation of a stable complex between two or more DNA-binding proteins in an ATP-dependent manner without itself being part of a final effector complex. In Pediococcus pentosaceus (strain ATCC 25745 / CCUG 21536 / LMG 10740 / 183-1w), this protein is DNA mismatch repair protein MutL.